The sequence spans 187 residues: Peptidyl-tRNA hydrolase (187 aa).

Tyr-15 contributes to the tRNA binding site. His-20 acts as the Proton acceptor in catalysis. Phe-65, Asn-67, and Asn-113 together coordinate tRNA.

Belongs to the PTH family. In terms of assembly, monomer.

Its subcellular location is the cytoplasm. The catalysed reaction is an N-acyl-L-alpha-aminoacyl-tRNA + H2O = an N-acyl-L-amino acid + a tRNA + H(+). Its function is as follows. Hydrolyzes ribosome-free peptidyl-tRNAs (with 1 or more amino acids incorporated), which drop off the ribosome during protein synthesis, or as a result of ribosome stalling. In terms of biological role, catalyzes the release of premature peptidyl moieties from peptidyl-tRNA molecules trapped in stalled 50S ribosomal subunits, and thus maintains levels of free tRNAs and 50S ribosomes. This is Peptidyl-tRNA hydrolase from Elusimicrobium minutum (strain Pei191).